We begin with the raw amino-acid sequence, 271 residues long: Malonyl-[acyl-carrier protein] O-methyltransferase (271 aa).

This sequence belongs to the methyltransferase superfamily.

It carries out the reaction malonyl-[ACP] + S-adenosyl-L-methionine = malonyl-[ACP] methyl ester + S-adenosyl-L-homocysteine. Its pathway is cofactor biosynthesis; biotin biosynthesis. Its function is as follows. Converts the free carboxyl group of a malonyl-thioester to its methyl ester by transfer of a methyl group from S-adenosyl-L-methionine (SAM). It allows to synthesize pimeloyl-ACP via the fatty acid synthetic pathway. This Halalkalibacterium halodurans (strain ATCC BAA-125 / DSM 18197 / FERM 7344 / JCM 9153 / C-125) (Bacillus halodurans) protein is Malonyl-[acyl-carrier protein] O-methyltransferase.